The chain runs to 158 residues: SsrA-binding protein (158 aa).

The segment at K132–G158 is disordered. Over residues D136 to G158 the composition is skewed to basic and acidic residues.

Belongs to the SmpB family.

Its subcellular location is the cytoplasm. Required for rescue of stalled ribosomes mediated by trans-translation. Binds to transfer-messenger RNA (tmRNA), required for stable association of tmRNA with ribosomes. tmRNA and SmpB together mimic tRNA shape, replacing the anticodon stem-loop with SmpB. tmRNA is encoded by the ssrA gene; the 2 termini fold to resemble tRNA(Ala) and it encodes a 'tag peptide', a short internal open reading frame. During trans-translation Ala-aminoacylated tmRNA acts like a tRNA, entering the A-site of stalled ribosomes, displacing the stalled mRNA. The ribosome then switches to translate the ORF on the tmRNA; the nascent peptide is terminated with the 'tag peptide' encoded by the tmRNA and targeted for degradation. The ribosome is freed to recommence translation, which seems to be the essential function of trans-translation. In Brucella anthropi (strain ATCC 49188 / DSM 6882 / CCUG 24695 / JCM 21032 / LMG 3331 / NBRC 15819 / NCTC 12168 / Alc 37) (Ochrobactrum anthropi), this protein is SsrA-binding protein.